The primary structure comprises 630 residues: Sodium-dependent serotonin transporter (630 aa).

Residues 1–87 (METTALNSQK…ERETWGKKVD (87 aa)) are Cytoplasmic-facing. Tyrosine 47 carries the phosphotyrosine modification. A helical membrane pass occupies residues 88 to 112 (FLLSVIGYAVDLGNIWRFPYVCYQN). Na(+) is bound by residues glycine 94, alanine 96, valine 97, aspartate 98, and asparagine 101. Aspartate 98 lines the serotonin pocket. The Extracellular segment spans residues 113-115 (GGG). A helical membrane pass occupies residues 116–135 (AFLLPYIIMAIFGGIPLFYM). The Cytoplasmic portion of the chain corresponds to 136–160 (ELALGQYHRNGCISIWRKICPIFKG). Tyrosine 142 carries the post-translational modification Phosphotyrosine. A helical membrane pass occupies residues 161–186 (IGYTICIIAFYIASYYNTIIAWALYY). At 187 to 252 (LISSFTDRLP…KGLQDVGGVS (66 aa)) the chain is on the extracellular side. A disulfide bridge connects residues cysteine 200 and cysteine 209. Asparagine 208 and asparagine 217 each carry an N-linked (GlcNAc...) asparagine glycan. The chain crosses the membrane as a helical span at residues 253–271 (WQLTLCIMLIFTIIYFSIW). Topologically, residues 272-277 (KGVKTS) are cytoplasmic. At threonine 276 the chain carries Phosphothreonine. The chain crosses the membrane as a helical span at residues 278–297 (GKVVWVTATFPYIVLSVLLV). At 298–324 (RGATLPGAWKGVLFYLKPNWQKLLETG) the chain is on the extracellular side. Residues 325–347 (VWIDAAAQIFFSLGPGFGVLLAF) form a helical membrane-spanning segment. Serine 336 contributes to the Na(+) binding site. Residues 348–360 (ASYNKFNNNCYQD) lie on the Cytoplasmic side of the membrane. Residues 361-380 (ALVTSAVNCMTSFVSGFVIF) form a helical membrane-spanning segment. Asparagine 368 contacts Na(+). Residues 381–421 (TVLGYMAEMRSEDVSEVAKDAGPSLLFITYAEAIANMPAST) lie on the Extracellular side of the membrane. The chain crosses the membrane as a helical span at residues 422 to 443 (FFAIIFFLMLITLGLDSTFAGL). Na(+)-binding residues include leucine 434, aspartate 437, and serine 438. Threonine 439 is a serotonin binding site. Residues 444–463 (EGVITAVLDEFPHIWAKHRE) lie on the Cytoplasmic side of the membrane. The chain crosses the membrane as a helical span at residues 464–483 (WFVLAVVITCFFGSLTTLTF). At 484-494 (GGAYVVKLLEE) the chain is on the extracellular side. 2 residues coordinate serotonin: glutamate 494 and tyrosine 495. Residues 495 to 516 (YATGPAVLTVVFIEAIAVSWFY) form a helical membrane-spanning segment. The Cytoplasmic portion of the chain corresponds to 517–538 (GVTQFCSDVKEMLGFSPGWFWR). A helical transmembrane segment spans residues 539-558 (ICWVAVSPVFLLFIICSFLM). The serotonin site is built by phenylalanine 556 and serine 559. The Extracellular portion of the chain corresponds to 559–574 (SPPQLRLFQYSYPHWS). A helical transmembrane segment spans residues 575–595 (VILGYCIGTSSVICIPTYITY). Over 596–630 (RLVTTPGTLKERIIKSITPETPTEIPCGDICLNAV) the chain is Cytoplasmic. Residues 616–624 (TPTEIPCGD) form an interaction with RAB4A region.

This sequence belongs to the sodium:neurotransmitter symporter (SNF) (TC 2.A.22) family. SLC6A4 subfamily. Monomer or homooligomer. Interacts (via C-terminus) with SCAMP2; the interaction is direct and retains transporter molecules intracellularly. Interacts with filamentous actin and STX1A. Interacts (via the N-terminus) with STX1A (via the H3 domain); this interaction regulates SLC4A6 channel conductance. Interacts with SEC23A, SEC24C and PATJ. Interacts with NOS1; the interaction may diminish the cell surface localization of SERT in the brain and, correspondingly, reduce serotonin reuptake. Interacts with TGFB1I1. Interacts with ITGAV:ITGB3. Interacts (via C-terminus) with ITGB3; this interaction regulates SLC6A4 trafficking. In terms of processing, phosphorylation at Thr-276 increases 5-HT uptake and is required for cGMP-mediated SERT regulation. In terms of tissue distribution, expressed in the intestinal crypt epithelial cells (at protein level).

The protein resides in the cell membrane. Its subcellular location is the endomembrane system. The protein localises to the endosome membrane. It is found in the synapse. It localises to the cell junction. The protein resides in the focal adhesion. Its subcellular location is the cell projection. The protein localises to the neuron projection. The catalysed reaction is serotonin(out) + K(+)(in) + Na(+)(out) + H(+)(in) = serotonin(in) + K(+)(out) + Na(+)(in) + H(+)(out). In terms of biological role, serotonin transporter that cotransports serotonin with one Na(+) ion in exchange for one K(+) ion and possibly one proton in an overall electroneutral transport cycle. Transports serotonin across the plasma membrane from the extracellular compartment to the cytosol thus limiting serotonin intercellular signaling. Essential for serotonin homeostasis in the central nervous system. In the developing somatosensory cortex, acts in glutamatergic neurons to control serotonin uptake and its trophic functions accounting for proper spatial organization of cortical neurons and elaboration of sensory circuits. In the mature cortex, acts primarily in brainstem raphe neurons to mediate serotonin uptake from the synaptic cleft back into the pre-synaptic terminal thus terminating serotonin signaling at the synapse. Modulates mucosal serotonin levels in the gastrointestinal tract through uptake and clearance of serotonin in enterocytes. Required for enteric neurogenesis and gastrointestinal reflexes. Regulates blood serotonin levels by ensuring rapid high affinity uptake of serotonin from plasma to platelets, where it is further stored in dense granules via vesicular monoamine transporters and then released upon stimulation. Mechanistically, the transport cycle starts with an outward-open conformation having Na1(+) and Cl(-) sites occupied. The binding of a second extracellular Na2(+) ion and serotonin substrate leads to structural changes to outward-occluded to inward-occluded to inward-open, where the Na2(+) ion and serotonin are released into the cytosol. Binding of intracellular K(+) ion induces conformational transitions to inward-occluded to outward-open and completes the cycle by releasing K(+) possibly together with a proton bound to Asp-98 into the extracellular compartment. Na1(+) and Cl(-) ions remain bound throughout the transport cycle. Additionally, displays serotonin-induced channel-like conductance for monovalent cations, mainly Na(+) ions. The channel activity is uncoupled from the transport cycle and may contribute to the membrane resting potential or excitability. The polypeptide is Sodium-dependent serotonin transporter (SLC6A4) (Cavia porcellus (Guinea pig)).